Reading from the N-terminus, the 216-residue chain is MKIGILGGTFDPIHFGHIRPAQEVKQQLKLDEVWLMPNHIPPHKQGTHVSSQARLAMAELIADEFPCFKVCDIEAKRDTPSYSAMTLTQLTKIYPQHEFYFIMGMDSFLSFTRWHEWQQLFGLCHLVVCKRPGWLLDDKDPMQKILTPRLHDVARPLPAKSGKIFMVDITQQDISSTQVRQQLMQGIMPSAVLPTSIQEYIRHNRLYRGDSSTKTD.

Belongs to the NadD family.

The enzyme catalyses nicotinate beta-D-ribonucleotide + ATP + H(+) = deamido-NAD(+) + diphosphate. The protein operates within cofactor biosynthesis; NAD(+) biosynthesis; deamido-NAD(+) from nicotinate D-ribonucleotide: step 1/1. Its function is as follows. Catalyzes the reversible adenylation of nicotinate mononucleotide (NaMN) to nicotinic acid adenine dinucleotide (NaAD). This chain is Probable nicotinate-nucleotide adenylyltransferase, found in Shewanella pealeana (strain ATCC 700345 / ANG-SQ1).